The primary structure comprises 259 residues: Methanethiol S-methyltransferase 2 (259 aa).

5 helical membrane passes run leucine 5–alanine 25, leucine 46–valine 66, threonine 88–proline 108, serine 115–alanine 135, and phenylalanine 182–alanine 202.

The protein belongs to the nurim family.

The protein resides in the membrane. The catalysed reaction is methanethiol + S-adenosyl-L-methionine = dimethyl sulfide + S-adenosyl-L-homocysteine + H(+). Functionally, catalyzes the methylation of methanethiol (MeSH) to yield dimethylsulphide (DMS). In Bradyrhizobium diazoefficiens (strain JCM 10833 / BCRC 13528 / IAM 13628 / NBRC 14792 / USDA 110), this protein is Methanethiol S-methyltransferase 2.